Reading from the N-terminus, the 563-residue chain is Quinidine resistance protein 1 (563 aa).

The segment covering 1–10 (MTKQQTSVMR) has biased composition (polar residues). Residues 1-50 (MTKQQTSVMRNASIAKEEREGSDNNNVDRSSSDAISDNDAERSNSHSEID) are disordered. Residues 1-75 (MTKQQTSVMR…KQKMLLVVQC (75 aa)) lie on the Cytoplasmic side of the membrane. Residues 23 to 33 (DNNNVDRSSSD) are compositionally biased toward low complexity. Basic and acidic residues predominate over residues 39 to 49 (DAERSNSHSEI). Residues 76-96 (AFTGFFSTVAGSIYYPVLTII) form a helical membrane-spanning segment. Topologically, residues 97–108 (ERKFNITEELAN) are extracellular. The helical transmembrane segment at 109 to 129 (VTIVVYFIFQGVAPSIMGGLA) threads the bilayer. At 130 to 135 (DTFGRR) the chain is on the cytoplasmic side. Residues 136-156 (PIVLWAILAYFCACIGLACAH) traverse the membrane as a helical segment. Topologically, residues 157 to 165 (NYAQILALR) are extracellular. A helical membrane pass occupies residues 166 to 186 (CLQAAGISPVIAINSGIMGDV). Residues 187 to 195 (TTKVERGGY) lie on the Cytoplasmic side of the membrane. A helical membrane pass occupies residues 196-216 (VGLVAGFQVVGTAFGALIGAG). At 217 to 224 (LSSKWGWR) the chain is on the extracellular side. Residues 225 to 245 (AIFWFLAIGSGICLVFSTLLM) traverse the membrane as a helical segment. Residues 246-296 (PETKRTLVGNGSVTPRSFLNRSLILHVGSVKKTLHLDDPDPETLEPRTSVD) lie on the Cytoplasmic side of the membrane. The chain crosses the membrane as a helical span at residues 297–317 (FLAPLKILHIREIDILLSIAG). Residues 318 to 341 (LQFSTWTTHQTALTIVLSKKYNLS) are Extracellular-facing. The chain crosses the membrane as a helical span at residues 342-362 (VAKIGLCFLPAGISTLTSIIS). The Cytoplasmic portion of the chain corresponds to 363-421 (AGRYLNWSYRTRKVKYNRWIKEQELQLMEKYKGDKNKVAELIHSNSHYAFNLVEARLHP). The chain crosses the membrane as a helical span at residues 422 to 442 (AFVTLLLSSIGFTAFGWCISV). Topologically, residues 443-445 (KTP) are extracellular. A helical membrane pass occupies residues 446–466 (LAAVLCTSAFASLFSNCILTF). At 467-481 (STTLIVDLFPSKAST) the chain is on the cytoplasmic side. A helical membrane pass occupies residues 482-502 (ATGCLNLFRCLLSAIFIAALT). Topologically, residues 503-511 (KMVEKMRYG) are extracellular. A helical membrane pass occupies residues 512–532 (GVFTFLSAITSSSSLLLFYLL). Over 533-563 (KNGKQLSFDRIRANDKSAGRSVGKNSEKVST) the chain is Cytoplasmic.

The protein belongs to the major facilitator superfamily. CAR1 family.

Its subcellular location is the cell membrane. Multidrug resistance transporter involved in resistance and adaptation to quinidine and ketoconazole. The polypeptide is Quinidine resistance protein 1 (QDR1) (Saccharomyces cerevisiae (strain ATCC 204508 / S288c) (Baker's yeast)).